A 224-amino-acid chain; its full sequence is Probable GTP-binding protein EngB (224 aa).

Residues 27 to 201 form the EngB-type G domain; the sequence is SGIEVAFAGR…DAIICQWLEQ (175 aa). GTP is bound by residues 35–42, 62–66, 80–83, 147–150, and 180–182; these read GRSNAGKS, GRTQL, DLPG, TKCD, and FSS. Residues Ser-42 and Thr-64 each contribute to the Mg(2+) site. A disordered region spans residues 205–224; sequence EYELPEEDDFDDSDEFTEEE.

Belongs to the TRAFAC class TrmE-Era-EngA-EngB-Septin-like GTPase superfamily. EngB GTPase family. It depends on Mg(2+) as a cofactor.

In terms of biological role, necessary for normal cell division and for the maintenance of normal septation. The chain is Probable GTP-binding protein EngB from Colwellia psychrerythraea (strain 34H / ATCC BAA-681) (Vibrio psychroerythus).